We begin with the raw amino-acid sequence, 459 residues long: Bifunctional protein GlmU (459 aa).

The pyrophosphorylase stretch occupies residues 1–230; the sequence is MSNRFAVILA…FDETLGVNDR (230 aa). Residues 9-12, Lys23, Gln73, and 78-79 each bind UDP-N-acetyl-alpha-D-glucosamine; these read LAAG and GT. Asp103 contacts Mg(2+). UDP-N-acetyl-alpha-D-glucosamine is bound by residues Gly140, Glu155, Asn170, and Asn228. Residue Asn228 participates in Mg(2+) binding. The linker stretch occupies residues 231-251; that stretch reads VALSQAEIIMKNRINRKNMVN. An N-acetyltransferase region spans residues 252–459; the sequence is GVTIIDPSNT…VDQLLNKKKS (208 aa). The UDP-N-acetyl-alpha-D-glucosamine site is built by Arg333 and Lys351. Catalysis depends on His363, which acts as the Proton acceptor. 2 residues coordinate UDP-N-acetyl-alpha-D-glucosamine: Tyr366 and Asn377. Residues 386 to 387, Ala423, and Arg440 each bind acetyl-CoA; that span reads NY.

It in the N-terminal section; belongs to the N-acetylglucosamine-1-phosphate uridyltransferase family. This sequence in the C-terminal section; belongs to the transferase hexapeptide repeat family. Homotrimer. Mg(2+) serves as cofactor.

The protein localises to the cytoplasm. The enzyme catalyses alpha-D-glucosamine 1-phosphate + acetyl-CoA = N-acetyl-alpha-D-glucosamine 1-phosphate + CoA + H(+). It catalyses the reaction N-acetyl-alpha-D-glucosamine 1-phosphate + UTP + H(+) = UDP-N-acetyl-alpha-D-glucosamine + diphosphate. The protein operates within nucleotide-sugar biosynthesis; UDP-N-acetyl-alpha-D-glucosamine biosynthesis; N-acetyl-alpha-D-glucosamine 1-phosphate from alpha-D-glucosamine 6-phosphate (route II): step 2/2. Its pathway is nucleotide-sugar biosynthesis; UDP-N-acetyl-alpha-D-glucosamine biosynthesis; UDP-N-acetyl-alpha-D-glucosamine from N-acetyl-alpha-D-glucosamine 1-phosphate: step 1/1. It participates in bacterial outer membrane biogenesis; LPS lipid A biosynthesis. In terms of biological role, catalyzes the last two sequential reactions in the de novo biosynthetic pathway for UDP-N-acetylglucosamine (UDP-GlcNAc). The C-terminal domain catalyzes the transfer of acetyl group from acetyl coenzyme A to glucosamine-1-phosphate (GlcN-1-P) to produce N-acetylglucosamine-1-phosphate (GlcNAc-1-P), which is converted into UDP-GlcNAc by the transfer of uridine 5-monophosphate (from uridine 5-triphosphate), a reaction catalyzed by the N-terminal domain. This chain is Bifunctional protein GlmU, found in Bacillus cereus (strain ATCC 14579 / DSM 31 / CCUG 7414 / JCM 2152 / NBRC 15305 / NCIMB 9373 / NCTC 2599 / NRRL B-3711).